We begin with the raw amino-acid sequence, 805 residues long: Serine/threonine-protein kinase fused (805 aa).

The Protein kinase domain occupies 4 to 254 (YAVSSLVGQG…WTQLLCHPFV (251 aa)). ATP-binding positions include 10-18 (VGQGSFGCV) and K33. The active-site Proton acceptor is D125. The segment at 269–289 (KESPFTNPEAKVKSSKQSDPE) is disordered. Positions 278–287 (AKVKSSKQSD) are enriched in basic and acidic residues. Residues S422 and S429 each carry the phosphoserine modification. Residues 447–456 (IATQEKHNQE) show a composition bias toward basic and acidic residues. The tract at residues 447-496 (IATQEKHNQENKPPAEAISYANSQPPQQQPQQLKHSMHSTNEEKLSSDNT) is disordered.

Belongs to the protein kinase superfamily. Ser/Thr protein kinase family. As to expression, expressed in all imaginal disks, higher level in wing disk.

It catalyses the reaction L-seryl-[protein] + ATP = O-phospho-L-seryl-[protein] + ADP + H(+). It carries out the reaction L-threonyl-[protein] + ATP = O-phospho-L-threonyl-[protein] + ADP + H(+). Its function is as follows. Probable serine/threonine-protein kinase; maternally required for correct patterning in the posterior part of each embryonic metamere. May be involved in control of cell division during metamorphosis and ovarian development. May interact with costal-2. This chain is Serine/threonine-protein kinase fused (fu), found in Drosophila melanogaster (Fruit fly).